We begin with the raw amino-acid sequence, 296 residues long: Putative peptide transport system permease protein BRA1093/BS1330_II1085 (296 aa).

6 consecutive transmembrane segments (helical) span residues 35–55 (IGLV…WITN), 97–117 (LWIG…IGIA), 131–151 (VMDA…SAAL), 205–225 (ILPN…AYAI), 229–249 (ATLS…GSIV), and 260–280 (WWIM…INLI). The ABC transmembrane type-1 domain maps to 97-281 (LWIGLTVAVL…ISALAINLIG (185 aa)).

The protein belongs to the binding-protein-dependent transport system permease family. In terms of assembly, the complex is composed of two ATP-binding proteins (BRA1094), two transmembrane proteins (BRA1092 and BRA1093) and a solute-binding protein (BRA1090).

It is found in the cell inner membrane. In terms of biological role, probably part of an ABC transporter complex that could be involved in peptide import. Probably responsible for the translocation of the substrate across the membrane. This is Putative peptide transport system permease protein BRA1093/BS1330_II1085 from Brucella suis biovar 1 (strain 1330).